The chain runs to 122 residues: MARIAGVNIPTNKRVLIALQYIHGIGPKIASEIIEKVKIAEDRRVNQLSDQEVLQIREIIDRDYVVEGDLRRETGINIKRLMDLGCYRGLRHRRGLPVRGQRTHTNARTRKGPAKAIAGKKK.

Residues 99-122 form a disordered region; the sequence is RGQRTHTNARTRKGPAKAIAGKKK.

It belongs to the universal ribosomal protein uS13 family. Part of the 30S ribosomal subunit. Forms a loose heterodimer with protein S19. Forms two bridges to the 50S subunit in the 70S ribosome.

In terms of biological role, located at the top of the head of the 30S subunit, it contacts several helices of the 16S rRNA. In the 70S ribosome it contacts the 23S rRNA (bridge B1a) and protein L5 of the 50S subunit (bridge B1b), connecting the 2 subunits; these bridges are implicated in subunit movement. Contacts the tRNAs in the A and P-sites. The protein is Small ribosomal subunit protein uS13 of Bradyrhizobium sp. (strain BTAi1 / ATCC BAA-1182).